The primary structure comprises 228 residues: 7-cyano-7-deazaguanine synthase (228 aa).

8-18 (LSGGLDSTTCL) contacts ATP. Residues Cys-188, Cys-198, Cys-201, and Cys-204 each contribute to the Zn(2+) site.

It belongs to the QueC family. The cofactor is Zn(2+).

It catalyses the reaction 7-carboxy-7-deazaguanine + NH4(+) + ATP = 7-cyano-7-deazaguanine + ADP + phosphate + H2O + H(+). The protein operates within purine metabolism; 7-cyano-7-deazaguanine biosynthesis. Its function is as follows. Catalyzes the ATP-dependent conversion of 7-carboxy-7-deazaguanine (CDG) to 7-cyano-7-deazaguanine (preQ(0)). The chain is 7-cyano-7-deazaguanine synthase from Legionella pneumophila (strain Corby).